Here is a 185-residue protein sequence, read N- to C-terminus: Large ribosomal subunit protein uL22 (185 aa).

Residues 157–185 (VAAPSPEEDAPKKKQSKKKMARQKLMQRD) form a disordered region. Residues 169–178 (KKQSKKKMAR) are compositionally biased toward basic residues.

Belongs to the universal ribosomal protein uL22 family.

The protein is Large ribosomal subunit protein uL22 (RpL17) of Ixodes scapularis (Black-legged tick).